A 607-amino-acid chain; its full sequence is Dolichyl-diphosphooligosaccharide--protein glycosyltransferase subunit 1 (607 aa).

Residues 1–23 (MEAPAARLFLLLLLGTWAPAPGS) form the signal peptide. The Lumenal portion of the chain corresponds to 24–434 (ASSEAPPLIN…VVHYTFNKVL (411 aa)). An N6-acetyllysine modification is found at lysine 187. Asparagine 299 carries N-linked (GlcNAc...) asparagine glycosylation. A helical membrane pass occupies residues 435-455 (MLQEPLLVVAAFYILFFTVII). Residues 456-607 (YVRLDFSITK…TKIDHILDAL (152 aa)) lie on the Cytoplasmic side of the membrane. Lysine 538 bears the N6-acetyllysine; alternate mark. Lysine 538 is covalently cross-linked (Glycyl lysine isopeptide (Lys-Gly) (interchain with G-Cter in SUMO2); alternate).

The protein belongs to the OST1 family. As to quaternary structure, component of the oligosaccharyltransferase (OST) complex. OST exists in two different complex forms which contain common core subunits RPN1, RPN2, OST48, OST4, DAD1 and TMEM258, either STT3A or STT3B as catalytic subunits, and form-specific accessory subunits. STT3A complex assembly occurs through the formation of 3 subcomplexes. Subcomplex 1 contains RPN1 and TMEM258, subcomplex 2 contains the STT3A-specific subunits STT3A, DC2/OSTC, and KCP2 as well as the core subunit OST4, and subcomplex 3 contains RPN2, DAD1, and OST48. The STT3A complex can form stable complexes with the Sec61 complex or with both the Sec61 and TRAP complexes. Interacts with TMEM35A/NACHO. Ubiquitinated by the ECS(ASB11) complex. Post-translationally, ufmylated by UFL1 in response to endoplasmic reticulum stress, promoting reticulophagy of endoplasmic reticulum sheets.

The protein localises to the endoplasmic reticulum membrane. Its pathway is protein modification; protein glycosylation. Functionally, subunit of the oligosaccharyl transferase (OST) complex that catalyzes the initial transfer of a defined glycan (Glc(3)Man(9)GlcNAc(2) in eukaryotes) from the lipid carrier dolichol-pyrophosphate to an asparagine residue within an Asn-X-Ser/Thr consensus motif in nascent polypeptide chains, the first step in protein N-glycosylation. N-glycosylation occurs cotranslationally and the complex associates with the Sec61 complex at the channel-forming translocon complex that mediates protein translocation across the endoplasmic reticulum (ER). All subunits are required for a maximal enzyme activity. In Pongo abelii (Sumatran orangutan), this protein is Dolichyl-diphosphooligosaccharide--protein glycosyltransferase subunit 1.